Reading from the N-terminus, the 243-residue chain is Adenylate dimethylallyltransferase (243 aa).

It belongs to the isopentenyl transferase family.

It carries out the reaction dimethylallyl diphosphate + AMP = N(6)-(dimethylallyl)adenosine 5'-phosphate + diphosphate. Its function is as follows. Transfers dimethylallyl groups to AMP as part of the biosynthesis of cytokinin phytohormones. The protein is Adenylate dimethylallyltransferase (tzs) of Rhizobium rhizogenes (Agrobacterium rhizogenes).